Consider the following 545-residue polypeptide: Putative serine/threonine-protein kinase L673 (545 aa).

In terms of domain architecture, Cyclin N-terminal spans 13–125 (RLGLVNWMLN…YKVYYLTIWK (113 aa)). Positions 264 to 543 (IDFQNKLGSG…NCLKKIKESF (280 aa)) constitute a Protein kinase domain. Residues 270-278 (LGSGTYGSV) and K291 contribute to the ATP site. The active-site Proton acceptor is the D384.

This sequence belongs to the protein kinase superfamily. Ser/Thr protein kinase family.

The enzyme catalyses L-seryl-[protein] + ATP = O-phospho-L-seryl-[protein] + ADP + H(+). It carries out the reaction L-threonyl-[protein] + ATP = O-phospho-L-threonyl-[protein] + ADP + H(+). This is Putative serine/threonine-protein kinase L673 from Acanthamoeba polyphaga (Amoeba).